The chain runs to 177 residues: UPF0178 protein TP_0845 (177 aa).

A disordered region spans residues 155 to 177 (EAKTGEEQCDWPSAQGKSQTGRR).

This sequence belongs to the UPF0178 family.

The sequence is that of UPF0178 protein TP_0845 from Treponema pallidum (strain Nichols).